The following is a 162-amino-acid chain: Putative 4-hydroxy-4-methyl-2-oxoglutarate aldolase (162 aa).

Substrate is bound by residues 75 to 78 (GDML) and R97. D98 provides a ligand contact to a divalent metal cation.

The protein belongs to the class II aldolase/RraA-like family. In terms of assembly, homotrimer. A divalent metal cation is required as a cofactor.

The enzyme catalyses 4-hydroxy-4-methyl-2-oxoglutarate = 2 pyruvate. It catalyses the reaction oxaloacetate + H(+) = pyruvate + CO2. Catalyzes the aldol cleavage of 4-hydroxy-4-methyl-2-oxoglutarate (HMG) into 2 molecules of pyruvate. Also contains a secondary oxaloacetate (OAA) decarboxylase activity due to the common pyruvate enolate transition state formed following C-C bond cleavage in the retro-aldol and decarboxylation reactions. The protein is Putative 4-hydroxy-4-methyl-2-oxoglutarate aldolase of Azotobacter vinelandii (strain DJ / ATCC BAA-1303).